The primary structure comprises 565 residues: Arginine--tRNA ligase (565 aa).

The short motif at 126-136 (ANPTGPLHIGH) is the 'HIGH' region element.

Belongs to the class-I aminoacyl-tRNA synthetase family. As to quaternary structure, monomer.

The protein resides in the cytoplasm. It carries out the reaction tRNA(Arg) + L-arginine + ATP = L-arginyl-tRNA(Arg) + AMP + diphosphate. The protein is Arginine--tRNA ligase of Wolbachia sp. subsp. Brugia malayi (strain TRS).